Reading from the N-terminus, the 317-residue chain is Melanocyte-stimulating hormone receptor (317 aa).

Topologically, residues M1–E37 are extracellular. N29 is a glycosylation site (N-linked (GlcNAc...) asparagine). Residues V38–I63 traverse the membrane as a helical segment. Residues A64–P72 lie on the Cytoplasmic side of the membrane. The chain crosses the membrane as a helical span at residues M73 to L93. Residues E94–N118 lie on the Extracellular side of the membrane. The helical transmembrane segment at V119 to V140 threads the bilayer. Residues D141–R163 are Cytoplasmic-facing. The helical transmembrane segment at I164 to Y183 threads the bilayer. Over N184–C191 the chain is Extracellular. Residues L192 to L211 form a helical membrane-spanning segment. Residues A212 to A240 are Cytoplasmic-facing. The chain crosses the membrane as a helical span at residues A241–L266. At C267 to N279 the chain is on the extracellular side. The chain crosses the membrane as a helical span at residues F280–F300. Over R301 to W317 the chain is Cytoplasmic. A lipid anchor (S-palmitoyl cysteine) is attached at C315.

The protein belongs to the G-protein coupled receptor 1 family. In terms of assembly, interacts with MGRN1, but does not undergo MGRN1-mediated ubiquitination; this interaction competes with GNAS-binding and thus inhibits agonist-induced cAMP production. Interacts with OPN3; the interaction results in a decrease in MC1R-mediated cAMP signaling and ultimately a decrease in melanin production in melanocytes.

Its subcellular location is the cell membrane. Its function is as follows. Receptor for MSH (alpha, beta and gamma) and ACTH. The activity of this receptor is mediated by G proteins which activate adenylate cyclase. Mediates melanogenesis, the production of eumelanin (black/brown) and phaeomelanin (red/yellow), via regulation of cAMP signaling in melanocytes. This chain is Melanocyte-stimulating hormone receptor (MC1R), found in Dama dama (Fallow deer).